Reading from the N-terminus, the 545-residue chain is MLTQLKTYPKLLKHYEEIKEVHMRDWFSKDKERASRYFVQLESLSLDYSKNRLNDTTLKLLFELAKDCSLKEKIEAMFKGEKINTTEKRAVLHTALRSLNDAEILLDNMEVLKSVRSVLKRMRAFSDSVRSGKRLGYTNQVITDIVNIGIGGSDLGALMVCTALKRYGHPRLKMHFVSNVDGTQILDVLEKINPASTLFIVASKTFSTQETLTNALTARKWFVERSGDEKHIAKHFVAVSTNKEAVQQFGIDEHNMFEFWDFVGGRYSLWSAIGLSIMIYLGKKNFNALLKGAYLMDEHFRNAPFESNLPVLMGLIGVWYINFFQSKSHLIAPYDQYLRHFPKFIQQLDMESNGKRISKKGEIIPYDTCPVVWGDMGINAQHAFFQLLHQGTHLIPIDFIASLDKKPNAKGHHEILFSNVLAQAQAFMKGKSYEEALGELLSKGLDKDEAKDLAHHRVFFGNRPSNILLLEKISPSNIGALVALYEHKVFVQGVIWDINSFDQWGVELGKELAVPILQELEGHKSNAYFDSSTRHLIELYKNYNQ.

Residue Glu-351 is the Proton donor of the active site. Catalysis depends on residues His-382 and Lys-510.

This sequence belongs to the GPI family.

The protein resides in the cytoplasm. The enzyme catalyses alpha-D-glucose 6-phosphate = beta-D-fructose 6-phosphate. The protein operates within carbohydrate biosynthesis; gluconeogenesis. It participates in carbohydrate degradation; glycolysis; D-glyceraldehyde 3-phosphate and glycerone phosphate from D-glucose: step 2/4. Its function is as follows. Catalyzes the reversible isomerization of glucose-6-phosphate to fructose-6-phosphate. This chain is Glucose-6-phosphate isomerase, found in Helicobacter pylori (strain J99 / ATCC 700824) (Campylobacter pylori J99).